The chain runs to 347 residues: N-acetyl-gamma-glutamyl-phosphate reductase (347 aa).

Cys-152 is a catalytic residue.

The protein belongs to the NAGSA dehydrogenase family. Type 1 subfamily.

It localises to the cytoplasm. The catalysed reaction is N-acetyl-L-glutamate 5-semialdehyde + phosphate + NADP(+) = N-acetyl-L-glutamyl 5-phosphate + NADPH + H(+). It functions in the pathway amino-acid biosynthesis; L-arginine biosynthesis; N(2)-acetyl-L-ornithine from L-glutamate: step 3/4. Its function is as follows. Catalyzes the NADPH-dependent reduction of N-acetyl-5-glutamyl phosphate to yield N-acetyl-L-glutamate 5-semialdehyde. This chain is N-acetyl-gamma-glutamyl-phosphate reductase, found in Neisseria meningitidis serogroup A / serotype 4A (strain DSM 15465 / Z2491).